A 450-amino-acid polypeptide reads, in one-letter code: 3-phosphoshikimate 1-carboxyvinyltransferase (450 aa).

3-phosphoshikimate contacts are provided by lysine 28, serine 29, and arginine 33. Lysine 28 contributes to the phosphoenolpyruvate binding site. Residues glycine 100 and arginine 128 each contribute to the phosphoenolpyruvate site. Positions 173, 175, 326, and 353 each coordinate 3-phosphoshikimate. A phosphoenolpyruvate-binding site is contributed by glutamine 175. The active-site Proton acceptor is the aspartate 326. The phosphoenolpyruvate site is built by arginine 357 and arginine 402.

The protein belongs to the EPSP synthase family. As to quaternary structure, monomer.

The protein resides in the cytoplasm. The catalysed reaction is 3-phosphoshikimate + phosphoenolpyruvate = 5-O-(1-carboxyvinyl)-3-phosphoshikimate + phosphate. It participates in metabolic intermediate biosynthesis; chorismate biosynthesis; chorismate from D-erythrose 4-phosphate and phosphoenolpyruvate: step 6/7. Its function is as follows. Catalyzes the transfer of the enolpyruvyl moiety of phosphoenolpyruvate (PEP) to the 5-hydroxyl of shikimate-3-phosphate (S3P) to produce enolpyruvyl shikimate-3-phosphate and inorganic phosphate. This chain is 3-phosphoshikimate 1-carboxyvinyltransferase, found in Brucella abortus biovar 1 (strain 9-941).